A 107-amino-acid chain; its full sequence is Sulmotoxin 1 (107 aa).

A signal peptide spans 1 to 19 (MKTLLLALAVVVLVCLGSA). Positions 20–34 (NELGLGRQRVDRRRR) are excised as a propeptide. 5 disulfides stabilise this stretch: Cys-44-Cys-68, Cys-47-Cys-55, Cys-61-Cys-83, Cys-87-Cys-98, and Cys-99-Cys-104.

The protein belongs to the three-finger toxin family. Ancestral subfamily. Boigatoxin sub-subfamily. As to quaternary structure, monomer. Expressed by the venom gland.

The protein localises to the secreted. Its function is as follows. Mammal-specific neurotoxin (tested on mice). Not toxic to lizards (tested on geckos). The protein is Sulmotoxin 1 of Spilotes sulphureus (Amazon puffing snake).